The following is a 345-amino-acid chain: Phenylalanine--tRNA ligase alpha subunit (345 aa).

Glu-262 lines the Mg(2+) pocket.

It belongs to the class-II aminoacyl-tRNA synthetase family. Phe-tRNA synthetase alpha subunit type 1 subfamily. In terms of assembly, tetramer of two alpha and two beta subunits. It depends on Mg(2+) as a cofactor.

The protein resides in the cytoplasm. The enzyme catalyses tRNA(Phe) + L-phenylalanine + ATP = L-phenylalanyl-tRNA(Phe) + AMP + diphosphate + H(+). This Ehrlichia canis (strain Jake) protein is Phenylalanine--tRNA ligase alpha subunit.